The sequence spans 327 residues: GMP reductase (327 aa).

Cys176 functions as the Thioimidate intermediate in the catalytic mechanism. 205–228 (IIADGGIRTHGDIAKSIRFGASMV) serves as a coordination point for NADP(+).

This sequence belongs to the IMPDH/GMPR family. GuaC type 2 subfamily.

The enzyme catalyses IMP + NH4(+) + NADP(+) = GMP + NADPH + 2 H(+). Catalyzes the irreversible NADPH-dependent deamination of GMP to IMP. It functions in the conversion of nucleobase, nucleoside and nucleotide derivatives of G to A nucleotides, and in maintaining the intracellular balance of A and G nucleotides. This is GMP reductase from Streptococcus agalactiae serotype V (strain ATCC BAA-611 / 2603 V/R).